The chain runs to 1433 residues: DNA polymerase III PolC-type (1433 aa).

The region spanning 419–575 (FVVFDVETTG…YDAEATGHLL (157 aa)) is the Exonuclease domain.

Belongs to the DNA polymerase type-C family. PolC subfamily.

The protein resides in the cytoplasm. The catalysed reaction is DNA(n) + a 2'-deoxyribonucleoside 5'-triphosphate = DNA(n+1) + diphosphate. Functionally, required for replicative DNA synthesis. This DNA polymerase also exhibits 3' to 5' exonuclease activity. The polypeptide is DNA polymerase III PolC-type (Halalkalibacterium halodurans (strain ATCC BAA-125 / DSM 18197 / FERM 7344 / JCM 9153 / C-125) (Bacillus halodurans)).